The primary structure comprises 599 residues: MKPTMAILERISKNSQENIDEVFTRLYRYLLRPDIYYVAYQNLYSNKGASTKGILDDTADGFSEEKIKKIIQSLKDGTYYPQPVRRMYIAKKNSKKMRPLGIPTFTDKLIQEAVRIILESIYEPVFEDVSHGFRPQRSCHTALKTIKREFGGARWFVEGDIKGCFDNIDHVTLIGLINLKIKDMKMSQLIYKFLKAGYLENWQYHKTYSGTPQGGILSPLLANIYLHELDKFVLQLKMKFDRESPERITPEYRELHNEIKRISHRLKKLEGEEKAKVLLEYQEKRKRLPTLPCTSQTNKVLKYVRYADDFIISVKGSKEDCQWIKEQLKLFIHNKLKMELSEEKTLITHSSQPARFLGYDIRVRRSGTIKRSGKVKKRTLNGSVELLIPLQDKIRQFIFDKKIAIQKKDSSWFPVHRKYLIRSTDLEIITIYNSELRGICNYYGLASNFNQLNYFAYLMEYSCLKTIASKHKGTLSKTISMFKDGSGSWGIPYEIKQGKQRRYFANFSECKSPYQFTDEISQAPVLYGYARNTLENRLKAKCCELCGTSDENTSYEIHHVNKVKNLKGKEKWEMAMIAKQRKTLVVCFHCHRHVIHKHK.

Residues 70–361 enclose the Reverse transcriptase domain; sequence IIQSLKDGTY…QPARFLGYDI (292 aa). The intron maturase type-2 stretch occupies residues 381–549; it reads NGSVELLIPL…AKCCELCGTS (169 aa).

In the N-terminal section; belongs to the bacterial reverse transcriptase family. Homodimer. Mg(2+) serves as cofactor.

It carries out the reaction DNA(n) + a 2'-deoxyribonucleoside 5'-triphosphate = DNA(n+1) + diphosphate. Functionally, multifunctional protein that promotes group II intron splicing and mobility by acting both on RNA and DNA. It has three activities: reverse transcriptase (RT) for intron duplication, maturase to promote splicing, and DNA endonuclease for site-specific cleavage of recipient alleles. The intron-encoded protein promotes splicing by facilitating the formation of the catalytically active structure of the intron RNA. After splicing, the protein remains bound to the excised intron lariat RNA, forming ribonucleoprotein particles, and cleaving the antisense strand of the recipient DNA in the 3' exon. After DNA cleavage, retrohoming occurs by a target DNA-primed reverse transcription of the intron RNA that had reverse spliced into the sense strand of the recipient DNA. It also contributes to the recognition of the DNA target site and acts as a repressor of its own translation. This chain is Group II intron-encoded protein LtrA (ltrA), found in Lactococcus lactis subsp. cremoris (Streptococcus cremoris).